The chain runs to 1461 residues: A disintegrin and metalloproteinase with thrombospondin motifs adt-1 (1461 aa).

A signal peptide spans Met1 to Ser21. Positions Val22–Tyr163 are excised as a propeptide. Asn69 carries an N-linked (GlcNAc...) asparagine glycan. The Cysteine switch signature appears at Ser190–Gln197. An N-linked (GlcNAc...) asparagine glycan is attached at Asn212. The region spanning Ile233–Leu435 is the Peptidase M12B domain. His388 is a Zn(2+) binding site. Residue Glu389 is part of the active site. Zn(2+) contacts are provided by His392 and His398. Cys405 and Cys410 are disulfide-bonded. In terms of domain architecture, Disintegrin spans Arg464–Asp546. 13 TSP type-1 domains span residues His708–Glu759, Phe761–Asp802, Glu804–Ile852, Ser853–Pro898, Leu903–Glu952, Tyr955–Leu1000, Ser1035–Leu1083, Ile1087–Ser1133, Ala1148–Ser1200, Ala1203–Ser1260, Asp1265–His1321, Asp1324–Asp1378, and Asp1382–Pro1435. 3 disulfide bridges follow: Cys719–Cys751, Cys723–Cys758, and Cys735–Cys741. 6 cysteine pairs are disulfide-bonded: Cys816–Cys846, Cys820–Cys851, Cys831–Cys836, Cys862–Cys892, Cys866–Cys897, and Cys877–Cys882. 3 disulfides stabilise this stretch: Cys1047/Cys1077, Cys1051/Cys1082, and Cys1062/Cys1067. 12 disulfide bridges follow: Cys1160–Cys1194, Cys1162–Cys1199, Cys1173–Cys1184, Cys1215–Cys1253, Cys1219–Cys1259, Cys1231–Cys1243, Cys1277–Cys1314, Cys1281–Cys1320, Cys1292–Cys1304, Cys1336–Cys1372, Cys1340–Cys1377, and Cys1351–Cys1362.

It depends on Zn(2+) as a cofactor. As to expression, in hermaphrodites, expressed in the vulva, head ganglia, ventral nerve cord and amphid neurons. Expressed in the rays of the male tail.

It localises to the secreted. In terms of biological role, plays a role in ray morphogenesis in the male tail, probably by remodeling the extracellular matrix (ECM) in the cuticle. The sequence is that of A disintegrin and metalloproteinase with thrombospondin motifs adt-1 from Caenorhabditis elegans.